We begin with the raw amino-acid sequence, 294 residues long: Pyridoxal 5'-phosphate synthase subunit PdxS (294 aa).

Asp-24 lines the D-ribose 5-phosphate pocket. The active-site Schiff-base intermediate with D-ribose 5-phosphate is Lys-81. Gly-153 provides a ligand contact to D-ribose 5-phosphate. Arg-165 is a D-glyceraldehyde 3-phosphate binding site. Residues Gly-214 and 235–236 (GS) each bind D-ribose 5-phosphate.

Belongs to the PdxS/SNZ family. Homohexamer and homododecamer. In the presence of PdxT, forms a dodecamer of heterodimers.

It catalyses the reaction aldehydo-D-ribose 5-phosphate + D-glyceraldehyde 3-phosphate + L-glutamine = pyridoxal 5'-phosphate + L-glutamate + phosphate + 3 H2O + H(+). It functions in the pathway cofactor biosynthesis; pyridoxal 5'-phosphate biosynthesis. Functionally, catalyzes the formation of pyridoxal 5'-phosphate from ribose 5-phosphate (RBP), glyceraldehyde 3-phosphate (G3P) and ammonia. The ammonia is provided by the PdxT subunit. Can also use ribulose 5-phosphate and dihydroxyacetone phosphate as substrates, resulting from enzyme-catalyzed isomerization of RBP and G3P, respectively. This Bacillus subtilis (strain 168) protein is Pyridoxal 5'-phosphate synthase subunit PdxS.